The sequence spans 1396 residues: MSEQEKGKGDLDDPNSKNTKCPDKFEQKVEEYLEVLNELHLTGRTSGFCMRNFTVEGAFNPKFQIRSFFAQLLHPINIIFRTGPKRDIIPLVKGFDGYLQPGSSLLVLGHEGSGGSTLLKALCGIVEENERLNGSLHYDGLDYKIAHSQFKADLSYCGEGHSKVATITVRRLLEFVCSCRLPASKYDHPRSHYIRRICEIIRDAFDLGDFYNHRILRVFNSGDQIKVDVAQTMCARPLIQCWDNNMRDFDSISVIDILSRIKVLSHKLGTTLVAIVSQASDRIFHMFDMVTLMYEGEQIFYGPTSRLKPYFLDLGFIPAKHSTTVEFVTSLTYPEMRIINKKHQGFIPSTPAEFRECWLRSEDYAKLIKFMDRYEENHSDIHAFKDAKFDQTRLQKFLRWLNSNPCLIPYRLQVFATAKVTFFQYLHDYSYIATFVFTYVFQALMLGSLFYNLRNESSELYSRGSVLSNAIVFTAIQTMSEVDIIFLKKSLFKEHRVQSLYHPSAALMGSSLVEFPMRIVVVTMYDIIVYFLSDLKRNARSFFIFYLFTIVITFCMSAVFRFIALLSTTAEIAALIGGIGALVLIIFCGAVMPVQYIGWWFRWIAYANPVNYGYESIMLNEFDGREIPCSLMAPAPDTAPIENNFCLATAGRTGTSIVSGYQYLQVVYQYKADFLWRNCGIILGFAIFILASSLILANFIRYDRESVHIPEFQKRKSYSQVASSFLIEPQDKPPSQTEPDNKKVDVSTTLSTNDNLVLCWRDLNFTVVTKTSKKQILTNVSGYLKKNTLTALLGENKSGKSVLLRILSQRGIAGSVEGEITLSGLKNPKNLRKRIGYVRKNPLFISEYTVRETLRLHAALRQSKQRSLSEQYAYVEYVIDFLGLGEVADFIVGDMGKGLSLYHKRLLSIAVELSARPGSILLLDEPANGLDSQSAWMLVCILQKLARSGLSILCSVSQPSSRILELFDMMLILDLNGNTVYYDTMGRDLSKLVNYFKRIHGTNEHSKDTADFVLHCIQFLKQGPEFDYAGAWASTNTHKQIIEHVNFIMDNPELTDDDFPNETRFMTSFFFQIYKISMRNFVAYWRDSSLLRARVAFNIVAGLIIGFSFYKQGVGVEETQNKMFSAYMLTVASTSTMNGLQPKFIYFRSIYEQYEQNTAIYSRTAFIIAFFLVEAVINCCFATLFFFGWYYPSGFYEFNHNIPFYGGFAWLMLMIFTLYYTTLGIGIATISPSIGTASIISGTAFVFIQYFNGMIQLPGVIVGFWKWMDALSPYKYFLEGMIGGVLHDAPITCEKFEIHYVDPPPNYSCGEYFSSFLNSSGHGIVYNPEAYSSCQYCPYKNADELMVGFGYHYNHKWRNFCIMIGYTAFNLGAAIALYYIIHKTPWKRLAARFVPD.

A disordered region spans residues 1–22; it reads MSEQEKGKGDLDDPNSKNTKCP. One can recognise an ABC transporter 1 domain in the interval 73 to 320; it reads LHPINIIFRT…FLDLGFIPAK (248 aa). The ABC transmembrane type-2 1 domain occupies 412 to 622; that stretch reads LQVFATAKVT…GYESIMLNEF (211 aa). Helical transmembrane passes span 431-451, 466-486, 512-532, 543-563, 572-592, and 680-700; these read YIAT…SLFY, VLSN…DIIF, LVEF…VYFL, FIFY…FRFI, IAAL…GAVM, and GIIL…ANFI. The ABC transporter 2 domain maps to 758–1001; it reads LCWRDLNFTV…LVNYFKRIHG (244 aa). Residue 794 to 801 coordinates ATP; sequence GENKSGKS. Residues 1071-1286 enclose the ABC transmembrane type-2 2 domain; it reads FQIYKISMRN…FLEGMIGGVL (216 aa). 5 helical membrane passes run 1095-1115, 1166-1186, 1208-1228, 1245-1265, and 1361-1381; these read VAFN…QGVG, FIIA…TLFF, FAWL…IGIA, FVFI…VGFW, and CIMI…YYII.

This sequence belongs to the ABC transporter superfamily. ABCG family. PDR (TC 3.A.1.205) subfamily.

It localises to the endoplasmic reticulum membrane. This chain is ATP-binding cassette transporter pdr1 (pdr1), found in Schizosaccharomyces pombe (strain 972 / ATCC 24843) (Fission yeast).